We begin with the raw amino-acid sequence, 321 residues long: Nod factor export ATP-binding protein I (321 aa).

Residues 17 to 247 (LSVEGLRKRY…EIGCDVVEVY (231 aa)) enclose the ABC transporter domain. 49–56 (GPNGAGKT) provides a ligand contact to ATP.

Belongs to the ABC transporter superfamily. Lipooligosaccharide exporter (TC 3.A.1.102) family. As to quaternary structure, the complex is composed of two ATP-binding proteins (NodI) and two transmembrane proteins (NodJ).

The protein resides in the cell inner membrane. In terms of biological role, part of the ABC transporter complex NodIJ involved in the export of the nodulation factors (Nod factors), the bacterial signal molecules that induce symbiosis and subsequent nodulation induction. Nod factors are LCO (lipo-chitin oligosaccharide), a modified beta-1,4-linked N-acetylglucosamine oligosaccharide. This subunit is responsible for energy coupling to the transport system. The sequence is that of Nod factor export ATP-binding protein I from Ralstonia nicotianae (strain ATCC BAA-1114 / GMI1000) (Ralstonia solanacearum).